We begin with the raw amino-acid sequence, 175 residues long: MISIEKFEIFGREIWIAVFFEEKIDGVTFSLDGCEYLMERINSLKALLERRNVSVNLAEEKSDYPKIVYNVLVGDIENQDALRFLSFRGVTPFEKKVYEVLTKKVKRGSVITYGELAKMLSTSPRAVGNAMKRNPYPIIVPCHRVVLKSGLGDYTPKREYKQFLLEIEGVKGWTS.

The active-site Nucleophile; methyl group acceptor is the Cys-142.

Belongs to the MGMT family.

The protein localises to the cytoplasm. The enzyme catalyses a 6-O-methyl-2'-deoxyguanosine in DNA + L-cysteinyl-[protein] = S-methyl-L-cysteinyl-[protein] + a 2'-deoxyguanosine in DNA. It carries out the reaction a 4-O-methyl-thymidine in DNA + L-cysteinyl-[protein] = a thymidine in DNA + S-methyl-L-cysteinyl-[protein]. In terms of biological role, involved in the cellular defense against the biological effects of O6-methylguanine (O6-MeG) and O4-methylthymine (O4-MeT) in DNA. Repairs the methylated nucleobase in DNA by stoichiometrically transferring the methyl group to a cysteine residue in the enzyme. This is a suicide reaction: the enzyme is irreversibly inactivated. The sequence is that of Methylated-DNA--protein-cysteine methyltransferase from Thermococcus barophilus (strain DSM 11836 / MP).